A 720-amino-acid chain; its full sequence is Glutaryl-7-aminocephalosporanic-acid acylase (720 aa).

Residues 1 to 29 (MLRVLHRAASALVMATVIGLAPAVAFALA) form the signal peptide. The propeptide at 190-198 (DPPDLADQG) is spacer peptide. The active-site Nucleophile is the S199. Residues H221 and E653 contribute to the active site.

This sequence belongs to the peptidase S45 family. In terms of assembly, heterotetramer of two alpha and two beta subunits processed from the same precursor.

The protein localises to the periplasm. The catalysed reaction is (7R)-7-(4-carboxybutanamido)cephalosporanate + H2O = (7R)-7-aminocephalosporanate + glutarate. Its function is as follows. Catalyzes the deacylation of 7 beta-(4-carboxybutanamido)cephalosporanic acid (glutaryl-7-aminocephalosporanic acid or GL-7-ACA) to 7-aminocephalosporanic acid (7-ACA). The sequence is that of Glutaryl-7-aminocephalosporanic-acid acylase from Pseudomonas sp. (strain SY-77).